The primary structure comprises 154 residues: Ribosome maturation factor RimP (154 aa).

This sequence belongs to the RimP family.

It localises to the cytoplasm. Functionally, required for maturation of 30S ribosomal subunits. The sequence is that of Ribosome maturation factor RimP from Haemophilus ducreyi (strain 35000HP / ATCC 700724).